A 193-amino-acid chain; its full sequence is Rho-related protein racF1 (193 aa).

Residue 10-17 (GDGAVGKT) participates in GTP binding. An Effector region motif is present at residues 32–40 (YIPTVFDNY). Residues 57 to 61 (DTAGQ) and 115 to 118 (TKQD) each bind GTP. Cysteine 190 is subject to Cysteine methyl ester. Cysteine 190 carries the S-geranylgeranyl cysteine lipid modification. A propeptide spans 191-193 (TIM) (removed in mature form).

This sequence belongs to the small GTPase superfamily. Rho family. Interacts with pakB.

The protein localises to the membrane. In terms of biological role, might act in concert and/or share functions with other members of the RHO family in the regulation of a subset of cytoskeletal rearrangements that are required for these processes. The protein is Rho-related protein racF1 (racF1) of Dictyostelium discoideum (Social amoeba).